The sequence spans 340 residues: Probable quinone oxidoreductase (340 aa).

This sequence belongs to the zinc-containing alcohol dehydrogenase family. Quinone oxidoreductase subfamily.

The catalysed reaction is 2 a quinone + NADPH + H(+) = 2 a 1,4-benzosemiquinone + NADP(+). The protein is Probable quinone oxidoreductase of Leishmania amazonensis.